Here is a 353-residue protein sequence, read N- to C-terminus: Phospho-N-acetylmuramoyl-pentapeptide-transferase (353 aa).

The next 10 helical transmembrane spans lie at 24–44 (LGFF…ILWA), 66–86 (TPTM…LLCA), 88–108 (LGNP…FVGF), 129–149 (FGML…KGLD), 160–180 (PLFE…FLSA), 192–212 (GLAS…VYVA), 229–249 (VGEL…FLWY), 256–276 (VFMG…NAIV), 281–301 (ILLV…ILQV), and 330–350 (KVIV…LLSL).

The protein belongs to the glycosyltransferase 4 family. MraY subfamily. The cofactor is Mg(2+).

The protein localises to the cell inner membrane. It catalyses the reaction UDP-N-acetyl-alpha-D-muramoyl-L-alanyl-gamma-D-glutamyl-meso-2,6-diaminopimeloyl-D-alanyl-D-alanine + di-trans,octa-cis-undecaprenyl phosphate = di-trans,octa-cis-undecaprenyl diphospho-N-acetyl-alpha-D-muramoyl-L-alanyl-D-glutamyl-meso-2,6-diaminopimeloyl-D-alanyl-D-alanine + UMP. It participates in cell wall biogenesis; peptidoglycan biosynthesis. Its function is as follows. Catalyzes the initial step of the lipid cycle reactions in the biosynthesis of the cell wall peptidoglycan: transfers peptidoglycan precursor phospho-MurNAc-pentapeptide from UDP-MurNAc-pentapeptide onto the lipid carrier undecaprenyl phosphate, yielding undecaprenyl-pyrophosphoryl-MurNAc-pentapeptide, known as lipid I. In Helicobacter acinonychis (strain Sheeba), this protein is Phospho-N-acetylmuramoyl-pentapeptide-transferase.